A 451-amino-acid polypeptide reads, in one-letter code: Tubulin beta-1 chain (451 aa).

Positions 1–4 match the MREI motif motif; that stretch reads MREI. Positions 11, 69, 138, 142, 143, and 144 each coordinate GTP. Residue glutamate 69 coordinates Mg(2+). At serine 172 the chain carries Phosphoserine; by CDK1. The GTP site is built by asparagine 204 and asparagine 226. Residues 430 to 451 are disordered; that stretch reads AGLEDSEEDVEEAEVEAEDKDH. Residues 433–451 show a composition bias toward acidic residues; sequence EDSEEDVEEAEVEAEDKDH. Residue serine 435 is modified to Phosphoserine. Position 440 is a 5-glutamyl polyglutamate (glutamate 440).

Belongs to the tubulin family. As to quaternary structure, dimer of alpha and beta chains. A typical microtubule is a hollow water-filled tube with an outer diameter of 25 nm and an inner diameter of 15 nM. Alpha-beta heterodimers associate head-to-tail to form protofilaments running lengthwise along the microtubule wall with the beta-tubulin subunit facing the microtubule plus end conferring a structural polarity. Microtubules usually have 13 protofilaments but different protofilament numbers can be found in some organisms and specialized cells. Interacts with RANBP10. It depends on Mg(2+) as a cofactor. Some glutamate residues at the C-terminus are polyglycylated, resulting in polyglycine chains on the gamma-carboxyl group. Glycylation is mainly limited to tubulin incorporated into axonemes (cilia and flagella) whereas glutamylation is prevalent in neuronal cells, centrioles, axonemes, and the mitotic spindle. Both modifications can coexist on the same protein on adjacent residues, and lowering polyglycylation levels increases polyglutamylation, and reciprocally. Cilia and flagella glycylation is required for their stability and maintenance. Flagella glycylation controls sperm motility. Post-translationally, some glutamate residues at the C-terminus are polyglutamylated, resulting in polyglutamate chains on the gamma-carboxyl group. Polyglutamylation plays a key role in microtubule severing by spastin (SPAST). SPAST preferentially recognizes and acts on microtubules decorated with short polyglutamate tails: severing activity by SPAST increases as the number of glutamates per tubulin rises from one to eight, but decreases beyond this glutamylation threshold. Glutamylation is also involved in cilia motility. In terms of processing, phosphorylated on Ser-172 by CDK1 during the cell cycle, from metaphase to telophase, but not in interphase. This phosphorylation inhibits tubulin incorporation into microtubules.

Its subcellular location is the cytoplasm. It is found in the cytoskeleton. Functionally, tubulin is the major constituent of microtubules, a cylinder consisting of laterally associated linear protofilaments composed of alpha- and beta-tubulin heterodimers. Microtubules grow by the addition of GTP-tubulin dimers to the microtubule end, where a stabilizing cap forms. Below the cap, tubulin dimers are in GDP-bound state, owing to GTPase activity of alpha-tubulin. This is Tubulin beta-1 chain (Tubb1) from Mus musculus (Mouse).